The primary structure comprises 224 residues: Small ribosomal subunit protein uS3 (224 aa).

Residues 38–106 (LREFVKEKLG…EVYLNVVEVR (69 aa)) enclose the KH type-2 domain.

It belongs to the universal ribosomal protein uS3 family. As to quaternary structure, part of the 30S ribosomal subunit. Forms a tight complex with proteins S10 and S14.

Its function is as follows. Binds the lower part of the 30S subunit head. Binds mRNA in the 70S ribosome, positioning it for translation. The polypeptide is Small ribosomal subunit protein uS3 (Anaeromyxobacter dehalogenans (strain 2CP-1 / ATCC BAA-258)).